Consider the following 198-residue polypeptide: DnaJ homolog subfamily C member 12 (198 aa).

N-acetylmethionine is present on M1. One can recognise a J domain in the interval D14 to R79. Residues E114–E156 are compositionally biased toward basic and acidic residues. The interval E114–F169 is disordered. Residues S160, S166, and S182 each carry the phosphoserine modification.

As to quaternary structure, interacts with HSPA8. Interacts with TPH1. Interacts with TPH2. As to expression, expressed at high levels in brain, heart, and testis, and at reduced levels in kidney and stomach.

It is found in the cytoplasm. In terms of biological role, probable co-chaperone that participates in the proper folding of biopterin-dependent aromatic amino acid hydroxylases, which include phenylalanine-4-hydroxylase (PAH), tyrosine 3-monooxygenase (TH) and peripheral and neuronal tryptophan hydroxylases (TPH1 and TPH2). In Homo sapiens (Human), this protein is DnaJ homolog subfamily C member 12 (DNAJC12).